Here is an 87-residue protein sequence, read N- to C-terminus: Exodeoxyribonuclease 7 small subunit (87 aa).

Belongs to the XseB family. In terms of assembly, heterooligomer composed of large and small subunits.

It localises to the cytoplasm. It catalyses the reaction Exonucleolytic cleavage in either 5'- to 3'- or 3'- to 5'-direction to yield nucleoside 5'-phosphates.. Its function is as follows. Bidirectionally degrades single-stranded DNA into large acid-insoluble oligonucleotides, which are then degraded further into small acid-soluble oligonucleotides. In Solidesulfovibrio magneticus (strain ATCC 700980 / DSM 13731 / RS-1) (Desulfovibrio magneticus), this protein is Exodeoxyribonuclease 7 small subunit.